A 536-amino-acid chain; its full sequence is Chaperonin GroEL (536 aa).

ATP contacts are provided by residues 30–33, 86–90, glycine 414, and aspartate 494; these read TLGP and DGTTT.

It belongs to the chaperonin (HSP60) family. Forms a cylinder of 14 subunits composed of two heptameric rings stacked back-to-back. Interacts with the co-chaperonin GroES.

The protein localises to the cytoplasm. It carries out the reaction ATP + H2O + a folded polypeptide = ADP + phosphate + an unfolded polypeptide.. In terms of biological role, together with its co-chaperonin GroES, plays an essential role in assisting protein folding. The GroEL-GroES system forms a nano-cage that allows encapsulation of the non-native substrate proteins and provides a physical environment optimized to promote and accelerate protein folding. In Methanosarcina barkeri (strain Fusaro / DSM 804), this protein is Chaperonin GroEL.